A 463-amino-acid chain; its full sequence is ATP synthase subunit beta (463 aa).

152–159 (GGAGVGKT) lines the ATP pocket.

It belongs to the ATPase alpha/beta chains family. F-type ATPases have 2 components, CF(1) - the catalytic core - and CF(0) - the membrane proton channel. CF(1) has five subunits: alpha(3), beta(3), gamma(1), delta(1), epsilon(1). CF(0) has three main subunits: a(1), b(2) and c(9-12). The alpha and beta chains form an alternating ring which encloses part of the gamma chain. CF(1) is attached to CF(0) by a central stalk formed by the gamma and epsilon chains, while a peripheral stalk is formed by the delta and b chains.

The protein localises to the cell inner membrane. The enzyme catalyses ATP + H2O + 4 H(+)(in) = ADP + phosphate + 5 H(+)(out). Produces ATP from ADP in the presence of a proton gradient across the membrane. The catalytic sites are hosted primarily by the beta subunits. This chain is ATP synthase subunit beta, found in Shewanella baltica (strain OS223).